The chain runs to 278 residues: Manganese import system permease protein ScaB (278 aa).

A run of 8 helical transmembrane segments spans residues 18 to 38 (ALIT…FIIL), 61 to 81 (ILGI…SIII), 94 to 114 (TAIG…ISVA), 134 to 154 (LDMW…SIFF), 174 to 194 (VNFY…TAMQ), 196 to 216 (VGTI…YLYA), 222 to 242 (MILL…FIGY), and 246 to 266 (VAAG…SFFI).

The protein belongs to the ABC-3 integral membrane protein family. As to quaternary structure, the complex is composed of two ATP-binding proteins (ScaC), two transmembrane proteins (ScaB) and a solute-binding protein (ScaA).

The protein localises to the cell membrane. Its function is as follows. Part of the high-affinity ABC transporter complex ScaABC involved in manganese import. Probably responsible for the translocation of the substrate across the membrane. Essential for growth under Mn(2+)-limiting conditions. The sequence is that of Manganese import system permease protein ScaB from Streptococcus gordonii.